We begin with the raw amino-acid sequence, 278 residues long: MANFKGHALPGSFFLIFGLWWSVKYPLKYFHQKGLKKNRLSLQQQRIEIIEGAVKALFAVIGILAEQFVPDGPHLHLYHENQWTKLMNWQHSTMYLFFGVSGIIDMLTYLYFNIVPLGLDRVVLAMAVFVEGFLFYFHVHGRPPLDQHIHSLLLFSLFGATISICLEVILRDNIVLELFRTTLLILQGTWFWQIGFVLFPPFGTPEWDQKDMDNVMFITMCFCWHYLVALCITAINYSLVYCFLTRVRRRAEGEIIGIQKLKSDHTYQSTLLSGSDEE.

Helical transmembrane passes span 7-27 (HALPGSFFLIFGLWWSVKYPL), 49-69 (IIEGAVKALFAVIGILAEQFV), 95-115 (YLFFGVSGIIDMLTYLYFNIV), 117-137 (LGLDRVVLAMAVFVEGFLFYF), 149-169 (IHSLLLFSLFGATISICLEVI), 183-203 (LLILQGTWFWQIGFVLFPPFG), and 215-235 (VMFITMCFCWHYLVALCITAI). Phosphoserine occurs at positions 273 and 275.

Belongs to the TMEM45 family.

The protein localises to the endosome membrane. The protein resides in the lysosome membrane. It localises to the golgi apparatus. Its subcellular location is the trans-Golgi network membrane. Functionally, plays a role in innate immunity. This is Transmembrane protein 45B (Tmem45b) from Rattus norvegicus (Rat).